Reading from the N-terminus, the 319-residue chain is Thioredoxin reductase (319 aa).

Residues 11–14 (SGPA), 40–41 (IA), Gln45, Asn54, Val87, Cys145, Asp288, and 295–297 (RQA) each bind FAD. Cys142 and Cys145 form a disulfide bridge.

Belongs to the class-II pyridine nucleotide-disulfide oxidoreductase family. As to quaternary structure, homodimer. FAD serves as cofactor.

The protein localises to the cytoplasm. The enzyme catalyses [thioredoxin]-dithiol + NADP(+) = [thioredoxin]-disulfide + NADPH + H(+). This is Thioredoxin reductase (TRR1) from Yarrowia lipolytica (strain CLIB 122 / E 150) (Yeast).